A 296-amino-acid polypeptide reads, in one-letter code: Fructose-bisphosphate aldolase class 1 (296 aa).

Glu175 acts as the Proton acceptor in catalysis. The Schiff-base intermediate with dihydroxyacetone-P role is filled by Lys212.

The protein belongs to the class I fructose-bisphosphate aldolase family.

The enzyme catalyses beta-D-fructose 1,6-bisphosphate = D-glyceraldehyde 3-phosphate + dihydroxyacetone phosphate. The protein operates within carbohydrate degradation; glycolysis; D-glyceraldehyde 3-phosphate and glycerone phosphate from D-glucose: step 4/4. The protein is Fructose-bisphosphate aldolase class 1 of Staphylococcus epidermidis (strain ATCC 35984 / DSM 28319 / BCRC 17069 / CCUG 31568 / BM 3577 / RP62A).